The primary structure comprises 128 residues: Ribosome-binding factor A (128 aa).

It belongs to the RbfA family. As to quaternary structure, monomer. Binds 30S ribosomal subunits, but not 50S ribosomal subunits or 70S ribosomes.

The protein resides in the cytoplasm. In terms of biological role, one of several proteins that assist in the late maturation steps of the functional core of the 30S ribosomal subunit. Associates with free 30S ribosomal subunits (but not with 30S subunits that are part of 70S ribosomes or polysomes). Required for efficient processing of 16S rRNA. May interact with the 5'-terminal helix region of 16S rRNA. The sequence is that of Ribosome-binding factor A from Rickettsia prowazekii (strain Madrid E).